The following is a 1358-amino-acid chain: MSYSYAEKKRIRKEFGVLPHILDVPYLLSIQTESYKKFLTADAAKGRLHSGLEIVLKQSFPVESKNGQYELHYVDYQIGEPTFDETECQVRGATYDAPLNVKLRLVVYNKDALPNEKIVEDIREEYVYMGDIPLMTTNGTFIINGTERVVVSQLHRSPGVFFSKDDSEEGAFSARIIPYRGSWLDFEFDSKGIIWARIDRKRKFCATVILKALGYTQEQILENFSESKTITFNSKGFALRLDNLSNMKGELLKFDIVDAQDNVIVKKNKKLTSRDVKKIKDAGVDSVAIDFDLVSTLRVAKDIVNEATGEVIAYANDDVTESLLESCVEVGMLELEVIDFITTERGRYISDTLKYDLTRNTDEALVEIYKVLRPGDPPAAASVKALFEGLFFIESRYSLSDIGRMKLNARLGSDKVSKDIYTLENSDIVGVIEELINIRDGKGKVDDIDHLGNRRVRSVGEMVENQFRIGLYRVEKGIRESMSLVHKDKLMPKDIVNSKPITAAIKEFFTSGALSQFMDQDNPLSEVTHKRRISALGPGGLSRDRAGFEVRDVHATHYGRLCPIETPEGPNIGLINSLASYARVNDYGFLEAPYRKVVDGKVTDEIEYLSAIDEDNYVIAQASTKLDENNHFVEDLIQCRSGGEAIFTESSRVQYMDVSAKQMVSAAAALIPFLEHDDANRVLMGANMQRQAVPTLKSEKPLVGTGMEKIVARDSGNCIIARNAGEVAEVDSNRIVIKVDTEKSQTSNLVDIYSLTKFKRSNKNTCINQRPIVNVGDKVEAGDILADGFATDFGELSLGHNLMVAFMPWNGYNFEDSILLSERIVKDDKYTSIHIEEFTCVARDTKLGPEEITADIPNVSESSLAKLDESGIVHIGANVEAGDILVAKITPKAEQQLTPEERLLRAIFNEKASNVADSSLRMPSGTSGTVINVQVFENDKGGKSKRALKIEKELIDKARKDFDEEFAVIESVVKSSIEQEVVGAKIQKAKGLKKGAILTKEFLATLPFSKWLEISFEDEKLEEKVQNAREYYEEAKIAIDAKFEAKKKSITQSNELSPGVLKTVKVFVAIKKRIQPGDKMAGRHGNKGVVSRVLPVEDMPYMEDGTPVDVCLNPLGIPSRMNIGQILEAHLGLASYGLGKKIEKTLEKTRKAAELRKTLEEVYNSVGDKKVNLEALNDEEILTLCDNLKGGVPIATPVFDGAKEEDIKSLLKIGGFATNGQMKLFDGRTGKPFDRHVTVGYMYMLKLDHLVDDKMHARSTGSYSLVTQQPLGGKAQFGGQRFGEMEVWALQAYGAAYTLREMLTVKSDDIAGRSKMYKNIVDGKLTMNVDVPESFNVLRNEVRALGIDMDFDYSSEEE.

This sequence belongs to the RNA polymerase beta chain family. In terms of assembly, the RNAP catalytic core consists of 2 alpha, 1 beta, 1 beta' and 1 omega subunit. When a sigma factor is associated with the core the holoenzyme is formed, which can initiate transcription.

It catalyses the reaction RNA(n) + a ribonucleoside 5'-triphosphate = RNA(n+1) + diphosphate. Its function is as follows. DNA-dependent RNA polymerase catalyzes the transcription of DNA into RNA using the four ribonucleoside triphosphates as substrates. This Francisella tularensis subsp. tularensis (strain FSC 198) protein is DNA-directed RNA polymerase subunit beta.